Consider the following 312-residue polypeptide: Olfactory receptor 8H3 (312 aa).

The Extracellular portion of the chain corresponds to 1-26 (MMGRRNDTNVADFILTGLSDSEEVQM). Residue Asn6 is glycosylated (N-linked (GlcNAc...) asparagine). The helical transmembrane segment at 27 to 47 (ALFMLFLLIYLITMLGNVGML) threads the bilayer. The Cytoplasmic portion of the chain corresponds to 48–55 (LIIRLDLQ). The helical transmembrane segment at 56–76 (LHTPMYFFLTHLSFIDLSYST) threads the bilayer. The Extracellular portion of the chain corresponds to 77-99 (VVTPKTLANLLTSNYISFTGCFA). A disulfide bridge links Cys97 with Cys189. A helical membrane pass occupies residues 100-120 (QMFCFVFLGTAECYLLSSMAY). The Cytoplasmic portion of the chain corresponds to 121-139 (DRYAAICSPLHYTVIMPKR). A helical transmembrane segment spans residues 140 to 160 (LCLALITGPYVIGFMDSFVNV). Topologically, residues 161–197 (VSMSRLHFCDSNIIHHFFCDTSPILALSCTDTDNTEM) are extracellular. Residues 198 to 217 (LIFIIAGSTLMVSLITISAS) traverse the membrane as a helical segment. Over 218–237 (YVSILSTILKINSTSGKQKA) the chain is Cytoplasmic. A helical membrane pass occupies residues 238-258 (FSTCVSHLLGVTIFYGTMIFT). The Extracellular portion of the chain corresponds to 259–271 (YLKPRKSYSLGRD). The helical transmembrane segment at 272-292 (QVAPVFYTIVIPMLNPLIYSL) threads the bilayer. Residues 293-312 (RNREVKNALIRVMQRRQDSR) are Cytoplasmic-facing.

The protein belongs to the G-protein coupled receptor 1 family.

Its subcellular location is the cell membrane. Its function is as follows. Odorant receptor. This is Olfactory receptor 8H3 (OR8H3) from Homo sapiens (Human).